The primary structure comprises 204 residues: MAEAERIIGTPDIPDAAGEGQERPDADPEREQQEQEQAPERTRGKRRVAVLFAVALFAYLLDLGSKMLVVAKLEHHEPIEIIGDWLRFAAIRNAGAAFGFGEAFTIIFTVIAAAVIVVIARLARKLHSLPWAIALGLLLGGALGNLTDRIFRAPGVFEGAVVDFIAPKHFAVFNLADSAIVCGGILIVILSFRGLDPDGTVHKD.

The segment at 1–42 (MAEAERIIGTPDIPDAAGEGQERPDADPEREQQEQEQAPERT) is disordered. Residues 20–42 (GQERPDADPEREQQEQEQAPERT) are compositionally biased toward basic and acidic residues. Helical transmembrane passes span 50-70 (VLFA…MLVV), 100-120 (FGEA…VVIA), and 126-146 (LHSL…LGNL). Residues Asp-163 and Asp-177 contribute to the active site. The chain crosses the membrane as a helical span at residues 170 to 190 (FAVFNLADSAIVCGGILIVIL).

Belongs to the peptidase A8 family.

The protein resides in the cell membrane. It carries out the reaction Release of signal peptides from bacterial membrane prolipoproteins. Hydrolyzes -Xaa-Yaa-Zaa-|-(S,diacylglyceryl)Cys-, in which Xaa is hydrophobic (preferably Leu), and Yaa (Ala or Ser) and Zaa (Gly or Ala) have small, neutral side chains.. The protein operates within protein modification; lipoprotein biosynthesis (signal peptide cleavage). Its function is as follows. This protein specifically catalyzes the removal of signal peptides from prolipoproteins. The polypeptide is Lipoprotein signal peptidase (Streptomyces coelicolor (strain ATCC BAA-471 / A3(2) / M145)).